The sequence spans 443 residues: Elongation factor 1-alpha (443 aa).

The tr-type G domain occupies 5–228 (KTHINLVVIG…DTMQPPKRPY (224 aa)). A G1 region spans residues 14–21 (GHVDSGKS). 14 to 21 (GHVDSGKS) lines the GTP pocket. Positions 70 to 74 (GITID) are G2. Positions 91–94 (DAPG) are G3. Residues 91-95 (DAPGH) and 153-156 (NKMD) contribute to the GTP site. A G4 region spans residues 153 to 156 (NKMD). Positions 192 to 194 (SGF) are G5.

The protein belongs to the TRAFAC class translation factor GTPase superfamily. Classic translation factor GTPase family. EF-Tu/EF-1A subfamily.

The protein localises to the cytoplasm. Its function is as follows. This protein promotes the GTP-dependent binding of aminoacyl-tRNA to the A-site of ribosomes during protein biosynthesis. This chain is Elongation factor 1-alpha (MEF-1), found in Plasmodium falciparum (isolate K1 / Thailand).